Reading from the N-terminus, the 411-residue chain is Ornithine aminotransferase (411 aa).

An N6-(pyridoxal phosphate)lysine modification is found at lysine 257.

Belongs to the class-III pyridoxal-phosphate-dependent aminotransferase family. OAT subfamily. Requires pyridoxal 5'-phosphate as cofactor.

Its subcellular location is the cytoplasm. The catalysed reaction is a 2-oxocarboxylate + L-ornithine = L-glutamate 5-semialdehyde + an L-alpha-amino acid. It participates in amino-acid biosynthesis; L-proline biosynthesis; L-glutamate 5-semialdehyde from L-ornithine: step 1/1. Functionally, catalyzes the interconversion of ornithine to glutamate semialdehyde. This is Ornithine aminotransferase from Bordetella bronchiseptica (strain ATCC BAA-588 / NCTC 13252 / RB50) (Alcaligenes bronchisepticus).